A 132-amino-acid polypeptide reads, in one-letter code: Small ribosomal subunit protein uS8 (132 aa).

The protein belongs to the universal ribosomal protein uS8 family. In terms of assembly, part of the 30S ribosomal subunit. Contacts proteins S5 and S12.

Functionally, one of the primary rRNA binding proteins, it binds directly to 16S rRNA central domain where it helps coordinate assembly of the platform of the 30S subunit. In Corynebacterium kroppenstedtii (strain DSM 44385 / JCM 11950 / CIP 105744 / CCUG 35717), this protein is Small ribosomal subunit protein uS8.